Here is a 279-residue protein sequence, read N- to C-terminus: Probable phosphatase phospho1 (279 aa).

Catalysis depends on aspartate 41, which acts as the Nucleophile. Aspartate 41 and aspartate 43 together coordinate Mg(2+). Aspartate 43 acts as the Proton donor in catalysis. Residues aspartate 52 and aspartate 133 each contribute to the substrate site. Residue aspartate 215 coordinates Mg(2+).

This sequence belongs to the HAD-like hydrolase superfamily. PHOSPHO family. Mg(2+) serves as cofactor.

The protein localises to the extracellular vesicle. The catalysed reaction is phosphoethanolamine + H2O = ethanolamine + phosphate. It carries out the reaction phosphocholine + H2O = choline + phosphate. Its function is as follows. Phosphatase that has a high activity toward phosphoethanolamine (PEA) and phosphocholine (PCho). Involved in the generation of inorganic phosphate for bone mineralization. The protein is Probable phosphatase phospho1 (phospho1) of Danio rerio (Zebrafish).